A 181-amino-acid chain; its full sequence is Large ribosomal subunit protein uL10 (181 aa).

The protein belongs to the universal ribosomal protein uL10 family. As to quaternary structure, part of the ribosomal stalk of the 50S ribosomal subunit. The N-terminus interacts with L11 and the large rRNA to form the base of the stalk. The C-terminus forms an elongated spine to which L12 dimers bind in a sequential fashion forming a multimeric L10(L12)X complex.

In terms of biological role, forms part of the ribosomal stalk, playing a central role in the interaction of the ribosome with GTP-bound translation factors. In Bradyrhizobium diazoefficiens (strain JCM 10833 / BCRC 13528 / IAM 13628 / NBRC 14792 / USDA 110), this protein is Large ribosomal subunit protein uL10.